We begin with the raw amino-acid sequence, 383 residues long: Chorismate synthase (383 aa).

Positions 40 and 46 each coordinate NADP(+). FMN is bound by residues 128–130 (RAS), Gly-291, 306–310 (KPIPT), and Arg-332.

This sequence belongs to the chorismate synthase family. As to quaternary structure, homotetramer. FMNH2 is required as a cofactor.

It catalyses the reaction 5-O-(1-carboxyvinyl)-3-phosphoshikimate = chorismate + phosphate. The protein operates within metabolic intermediate biosynthesis; chorismate biosynthesis; chorismate from D-erythrose 4-phosphate and phosphoenolpyruvate: step 7/7. In terms of biological role, catalyzes the anti-1,4-elimination of the C-3 phosphate and the C-6 proR hydrogen from 5-enolpyruvylshikimate-3-phosphate (EPSP) to yield chorismate, which is the branch point compound that serves as the starting substrate for the three terminal pathways of aromatic amino acid biosynthesis. This reaction introduces a second double bond into the aromatic ring system. In Moorella thermoacetica (strain ATCC 39073 / JCM 9320), this protein is Chorismate synthase.